Consider the following 147-residue polypeptide: Sec-independent protein translocase protein TatB (147 aa).

Residues 2–22 (FSSIGWPEIFTVLILGLIIIG) form a helical membrane-spanning segment. Residues 96 to 147 (FDPKKIMASGTEGEAYRERGINPQPAGDSASPQTPSNKESQPKAGFSWDDIT) form a disordered region. Residues 125–134 (ASPQTPSNKE) show a composition bias toward polar residues.

This sequence belongs to the TatB family. In terms of assembly, the Tat system comprises two distinct complexes: a TatABC complex, containing multiple copies of TatA, TatB and TatC subunits, and a separate TatA complex, containing only TatA subunits. Substrates initially bind to the TatABC complex, which probably triggers association of the separate TatA complex to form the active translocon.

The protein resides in the cell membrane. Part of the twin-arginine translocation (Tat) system that transports large folded proteins containing a characteristic twin-arginine motif in their signal peptide across membranes. Together with TatC, TatB is part of a receptor directly interacting with Tat signal peptides. TatB may form an oligomeric binding site that transiently accommodates folded Tat precursor proteins before their translocation. The protein is Sec-independent protein translocase protein TatB of Corynebacterium diphtheriae (strain ATCC 700971 / NCTC 13129 / Biotype gravis).